Here is a 1070-residue protein sequence, read N- to C-terminus: Carbamoyl phosphate synthase large chain (1070 aa).

Residues 1–401 (MPKRDDIKTI…ALLKAVRSLE (401 aa)) are carboxyphosphate synthetic domain. Residues arginine 129, arginine 169, glycine 175, glycine 176, lysine 208, isoleucine 210, glutamate 215, glycine 241, isoleucine 242, histidine 243, glutamine 284, and glutamate 298 each coordinate ATP. Residues 133–327 (RDLMNELGEP…IAKLAAKIAV (195 aa)) form the ATP-grasp 1 domain. Mg(2+) is bound by residues glutamine 284, glutamate 298, and asparagine 300. The Mn(2+) site is built by glutamine 284, glutamate 298, and asparagine 300. Positions 402–546 (VGADHLLLEE…YSTYEEENES (145 aa)) are oligomerization domain. Positions 547–929 (TRSAKESVIV…ALYKGFVASG (383 aa)) are carbamoyl phosphate synthetic domain. One can recognise an ATP-grasp 2 domain in the interval 671–861 (EKALEILQIP…MANVATRVIL (191 aa)). Residues arginine 707, arginine 746, valine 748, glutamate 752, glycine 777, valine 778, histidine 779, serine 780, glutamine 820, and glutamate 832 each contribute to the ATP site. Mg(2+) is bound by residues glutamine 820, glutamate 832, and asparagine 834. Mn(2+) contacts are provided by glutamine 820, glutamate 832, and asparagine 834. In terms of domain architecture, MGS-like spans 930 to 1070 (TTMHDYGTVL…SEVKQPKVRV (141 aa)). The segment at 930 to 1070 (TTMHDYGTVL…SEVKQPKVRV (141 aa)) is allosteric domain.

This sequence belongs to the CarB family. As to quaternary structure, composed of two chains; the small (or glutamine) chain promotes the hydrolysis of glutamine to ammonia, which is used by the large (or ammonia) chain to synthesize carbamoyl phosphate. Tetramer of heterodimers (alpha,beta)4. The cofactor is Mg(2+). Requires Mn(2+) as cofactor.

The enzyme catalyses hydrogencarbonate + L-glutamine + 2 ATP + H2O = carbamoyl phosphate + L-glutamate + 2 ADP + phosphate + 2 H(+). It catalyses the reaction hydrogencarbonate + NH4(+) + 2 ATP = carbamoyl phosphate + 2 ADP + phosphate + 2 H(+). The protein operates within amino-acid biosynthesis; L-arginine biosynthesis; carbamoyl phosphate from bicarbonate: step 1/1. It participates in pyrimidine metabolism; UMP biosynthesis via de novo pathway; (S)-dihydroorotate from bicarbonate: step 1/3. In terms of biological role, large subunit of the glutamine-dependent carbamoyl phosphate synthetase (CPSase). CPSase catalyzes the formation of carbamoyl phosphate from the ammonia moiety of glutamine, carbonate, and phosphate donated by ATP, constituting the first step of 2 biosynthetic pathways, one leading to arginine and/or urea and the other to pyrimidine nucleotides. The large subunit (synthetase) binds the substrates ammonia (free or transferred from glutamine from the small subunit), hydrogencarbonate and ATP and carries out an ATP-coupled ligase reaction, activating hydrogencarbonate by forming carboxy phosphate which reacts with ammonia to form carbamoyl phosphate. This is Carbamoyl phosphate synthase large chain from Listeria welshimeri serovar 6b (strain ATCC 35897 / DSM 20650 / CCUG 15529 / CIP 8149 / NCTC 11857 / SLCC 5334 / V8).